A 446-amino-acid chain; its full sequence is D-inositol 3-phosphate glycosyltransferase (446 aa).

A disordered region spans residues 1 to 21 (MSHYVGRLGRRSPAGSGRLRL). H34 is a 1D-myo-inositol 3-phosphate binding site. UDP-N-acetyl-alpha-D-glucosamine is bound by residues 40–41 (QP) and G48. Residues 45 to 50 (DAGGMN), K103, Y136, T160, and R180 each bind 1D-myo-inositol 3-phosphate. UDP-N-acetyl-alpha-D-glucosamine is bound by residues R255, K260, and V321. The Mg(2+) site is built by F330, R331, and A333. UDP-N-acetyl-alpha-D-glucosamine contacts are provided by E343 and E351. T357 is a binding site for Mg(2+).

It belongs to the glycosyltransferase group 1 family. MshA subfamily. Homodimer.

It carries out the reaction 1D-myo-inositol 3-phosphate + UDP-N-acetyl-alpha-D-glucosamine = 1D-myo-inositol 2-acetamido-2-deoxy-alpha-D-glucopyranoside 3-phosphate + UDP + H(+). In terms of biological role, catalyzes the transfer of a N-acetyl-glucosamine moiety to 1D-myo-inositol 3-phosphate to produce 1D-myo-inositol 2-acetamido-2-deoxy-glucopyranoside 3-phosphate in the mycothiol biosynthesis pathway. The polypeptide is D-inositol 3-phosphate glycosyltransferase (Streptomyces scabiei (strain 87.22)).